Reading from the N-terminus, the 587-residue chain is Protein FRIGIDA-ESSENTIAL 1 (587 aa).

The C3H1-type zinc-finger motif lies at 96-123 (KRAALPCKFFAKGWCFNGVSCKFLHVKE). 3 disordered regions span residues 264–346 (DMGS…SFTI), 368–421 (GDRP…HQET), and 467–492 (IKPA…SDEI). Residues 294 to 304 (NGNSLSGSGSL) show a composition bias toward low complexity. The span at 470–479 (AGHDSWHRSD) shows a compositional bias: basic and acidic residues.

As to quaternary structure, component of the transcription activator complex FRI-C composed of FRI, FRL1, SUF4, FLX and FES1. Interacts with FLX, (via C-terminus) with FRI (via C-terminus), and with RIN1, a component of the SWR1 chromatin-remodeling complex. As to expression, expressed in root and shoot apices and vasculature.

The protein localises to the nucleus. In terms of biological role, transcriptional activator involved in the FRIGIDA-mediated vernalization pathway, but not in the autonomous flowering pathway. Acts cooperatively with FRI (FRIGIDA) or FRL1 (FRIGIDA-LIKE 1) to promote FLC (FLOWERING LOCUS C) expression. Required for the stabilization of the FRI-C complex. This is Protein FRIGIDA-ESSENTIAL 1 (FES1) from Arabidopsis thaliana (Mouse-ear cress).